The primary structure comprises 510 residues: Cytochrome P450 monooxygenase macH (510 aa).

Residues 7–29 form a helical membrane-spanning segment; that stretch reads LPVSLWLIAAGTFAVYHAIRAVY. Residue Cys-454 participates in heme binding.

Belongs to the cytochrome P450 family. Requires heme as cofactor.

The protein resides in the membrane. It functions in the pathway secondary metabolite biosynthesis; terpenoid biosynthesis. Its function is as follows. Cytochrome P450 monooxygenase; part of the gene cluster that mediates the biosynthesis of macrophorins, isoprenoid epoxycyclohexenones containing cyclized drimane moieties. The first step of the pathway is the synthesis of 6-methylsalicylic acid (6-MSA) by the polyketide synthase macA. 6-MSA is then converted to m-cresol by the decarboxylase macB. The cytochrome P450 monooxygenase macC then catalyzes the oxidation of m-cresol to toluquinol. Epoxidation of toluquinol is then performed by the short chain dehydrogenase macD, with the help of macE, and a further prenylation by macG leads to 7-deacetoxyyanuthone A. The next step is the hydroxylation of C-22 of 7-deacetoxyyanuthone A by the cytochrome P450 monooxygenase macH to yield 22-deacetylyanuthone A. O-Mevalon transferase macI then attaches mevalon to the hydroxyl group of 22-deacetylyanuthone A to produce yanuthone E. The terpene cyclase macJ catalyzes the cyclization of 22-deacetylyanuthone A to macrophorin A. MacJ is also able to catalyze cyclization of yanuthone E and 7-deacetoxyyanuthone A to their corresponding macrophorins. The macJ products can be further modified by macH and macJ, as well as by the FAD-dependent monooxygenase macF, to produce additional macrophorins, including 4'-oxomacrophorin A, 4'-oxomacrophorin D and 4'-oxomacrophorin E. This chain is Cytochrome P450 monooxygenase macH, found in Penicillium terrestre.